The sequence spans 391 residues: Response regulator aspartate phosphatase I (391 aa).

6 TPR repeats span residues 62 to 95, 150 to 183, 184 to 217, 224 to 257, 275 to 311, and 338 to 371; these read LEFRHEIMLSYMKSKEIEDLNNAYETIKEIEKQG, SYVYYYMKQTYFSMNYANRALKIFREYEEYAVQT, VRCQFIVAGNLIDSLEYERALEQFLKSLEISKES, AMSHMNIGICYDELKEYKKASQHLILALEIFEKS, KQQNYNVALIYFRKGRFIADKSDDKEYSAKFKILEGL, and ENFSIEVADYFHEQGNLMLSNEYYRMSIEARRKI.

Belongs to the Rap family.

Its subcellular location is the cytoplasm. Its activity is regulated as follows. Inhibited by PhrI. Functionally, activates ICEBs1 gene expression, excision and transfer by inactivating the ICEBs1 repressor protein ImmR. RapI-mediated induction likely results from an increase in the specific activity of the protease ImmA, which mediates proteolysis of ImmR. In addition, is involved in regulation of sporulation. Acts as a phosphatase that specifically dephosphorylates the sporulation initiation phosphotransferase Spo0F and inhibits its activity. This is Response regulator aspartate phosphatase I (rapI) from Bacillus subtilis (strain 168).